Consider the following 460-residue polypeptide: A-type ATP synthase subunit B (460 aa).

The protein belongs to the ATPase alpha/beta chains family. As to quaternary structure, has multiple subunits with at least A(3), B(3), C, D, E, F, H, I and proteolipid K(x).

The protein localises to the cell membrane. Functionally, component of the A-type ATP synthase that produces ATP from ADP in the presence of a proton gradient across the membrane. The B chain is a regulatory subunit. In Thermofilum pendens (strain DSM 2475 / Hrk 5), this protein is A-type ATP synthase subunit B.